A 135-amino-acid polypeptide reads, in one-letter code: Transcription antitermination protein NusB (135 aa).

The protein belongs to the NusB family.

Functionally, involved in transcription antitermination. Required for transcription of ribosomal RNA (rRNA) genes. Binds specifically to the boxA antiterminator sequence of the ribosomal RNA (rrn) operons. This is Transcription antitermination protein NusB from Bdellovibrio bacteriovorus (strain ATCC 15356 / DSM 50701 / NCIMB 9529 / HD100).